Here is a 187-residue protein sequence, read N- to C-terminus: UPF0301 protein Cpar_0662 (187 aa).

This sequence belongs to the UPF0301 (AlgH) family.

The chain is UPF0301 protein Cpar_0662 from Chlorobaculum parvum (strain DSM 263 / NCIMB 8327) (Chlorobium vibrioforme subsp. thiosulfatophilum).